Here is a 247-residue protein sequence, read N- to C-terminus: Probable 2-phosphosulfolactate phosphatase (247 aa).

It belongs to the ComB family. The cofactor is Mg(2+).

The enzyme catalyses (2R)-O-phospho-3-sulfolactate + H2O = (2R)-3-sulfolactate + phosphate. In Clostridium perfringens (strain 13 / Type A), this protein is Probable 2-phosphosulfolactate phosphatase.